The following is a 327-amino-acid chain: Gonadotropin-releasing hormone receptor (327 aa).

Residues 1–37 (MASASPEQNQNHCSAVNNSNMLMQGNLPTLTLSGKIR) are Extracellular-facing. An N-linked (GlcNAc...) asparagine glycan is attached at N17. Residues 38-57 (VTVTFFLFLLSTIFNASFLL) traverse the membrane as a helical segment. At 58–76 (KLQKWTQKKEKGKKLSRMK) the chain is on the cytoplasmic side. A helical transmembrane segment spans residues 77 to 96 (VLLKHLTLANLLETLIVMPL). Topologically, residues 97-114 (DGMWNITVQWYAGEFLCK) are extracellular. Residue N101 is glycosylated (N-linked (GlcNAc...) asparagine). A disulfide bond links C113 and C195. Residues 115–136 (VLSYLKLFSMYAPAFMMVVISL) form a helical membrane-spanning segment. Over 137-163 (DRSLAITRPLAMKNNGKLGQSMIGLAW) the chain is Cytoplasmic. The chain crosses the membrane as a helical span at residues 164 to 183 (LLSGIFAGPQLYIFRMIHLA). The Extracellular segment spans residues 184 to 211 (DSSGQTEGFPQCVTHCSFPQWWHQAFYN). The helical transmembrane segment at 212 to 231 (FFTFSCLFIIPLFITLICNA) threads the bilayer. The Cytoplasmic portion of the chain corresponds to 232–280 (KIIFTLTRVLHQDPHELQLNQSKNNIPRARLRTLKMTVAFATSFTVCWT). The helical transmembrane segment at 281-299 (PYYVLGIWYWFDPEMLNRV) threads the bilayer. Over 300 to 305 (SDPVNH) the chain is Extracellular. A helical membrane pass occupies residues 306-325 (FFFLFALLNPCFDPLIYGYF). The Cytoplasmic portion of the chain corresponds to 326 to 327 (SL).

Belongs to the G-protein coupled receptor 1 family.

It localises to the cell membrane. Receptor for gonadotropin releasing hormone (GnRH) that mediates the action of GnRH to stimulate the secretion of the gonadotropic hormones luteinizing hormone (LH) and follicle-stimulating hormone (FSH). This receptor mediates its action by association with G-proteins that activate a phosphatidylinositol-calcium second messenger system. The protein is Gonadotropin-releasing hormone receptor (GNRHR) of Canis lupus familiaris (Dog).